Consider the following 130-residue polypeptide: Small ribosomal subunit protein uS9 (130 aa).

Belongs to the universal ribosomal protein uS9 family.

The polypeptide is Small ribosomal subunit protein uS9 (Pseudomonas fluorescens (strain Pf0-1)).